We begin with the raw amino-acid sequence, 478 residues long: Adenylosuccinate lyase (478 aa).

Residues 14–15 (RY), 81–83 (KHD), and 107–108 (TS) contribute to the substrate site. Histidine 155 acts as the Proton donor/acceptor in catalysis. Glutamine 237 lines the substrate pocket. Residue serine 285 is the Proton donor/acceptor of the active site. 4 residues coordinate substrate: arginine 299, arginine 325, serine 330, and arginine 334.

Belongs to the lyase 1 family. Adenylosuccinate lyase subfamily. As to quaternary structure, homotetramer. Residues from neighboring subunits contribute catalytic and substrate-binding residues to each active site.

It carries out the reaction N(6)-(1,2-dicarboxyethyl)-AMP = fumarate + AMP. The catalysed reaction is (2S)-2-[5-amino-1-(5-phospho-beta-D-ribosyl)imidazole-4-carboxamido]succinate = 5-amino-1-(5-phospho-beta-D-ribosyl)imidazole-4-carboxamide + fumarate. Its pathway is purine metabolism; AMP biosynthesis via de novo pathway; AMP from IMP: step 2/2. It functions in the pathway purine metabolism; IMP biosynthesis via de novo pathway; 5-amino-1-(5-phospho-D-ribosyl)imidazole-4-carboxamide from 5-amino-1-(5-phospho-D-ribosyl)imidazole-4-carboxylate: step 2/2. Its function is as follows. Catalyzes two non-sequential steps in de novo AMP synthesis: converts (S)-2-(5-amino-1-(5-phospho-D-ribosyl)imidazole-4-carboxamido)succinate (SAICAR) to fumarate plus 5-amino-1-(5-phospho-D-ribosyl)imidazole-4-carboxamide, and thereby also contributes to de novo IMP synthesis, and converts succinyladenosine monophosphate (SAMP) to AMP and fumarate. The chain is Adenylosuccinate lyase from Caenorhabditis briggsae.